Reading from the N-terminus, the 284-residue chain is Probable tRNA-splicing endonuclease subunit sen34 (284 aa).

Residues Y206, H214, and K245 contribute to the active site.

It belongs to the tRNA-intron endonuclease family. In terms of assembly, heterotetramer composed of sen2, sen15, sen34 and sen54. Interacts directly with sen15.

The enzyme catalyses pretRNA = a 3'-half-tRNA molecule with a 5'-OH end + a 5'-half-tRNA molecule with a 2',3'-cyclic phosphate end + an intron with a 2',3'-cyclic phosphate and a 5'-hydroxyl terminus.. Functionally, constitutes one of the two catalytic subunit of the tRNA-splicing endonuclease complex, a complex responsible for identification and cleavage of the splice sites in pre-tRNA. It cleaves pre-tRNA at the 5'- and 3'-splice sites to release the intron. The products are an intron and two tRNA half-molecules bearing 2',3'-cyclic phosphate and 5'-OH termini. There are no conserved sequences at the splice sites, but the intron is invariably located at the same site in the gene, placing the splice sites an invariant distance from the constant structural features of the tRNA body. It probably carries the active site for 3'-splice site cleavage. The chain is Probable tRNA-splicing endonuclease subunit sen34 (sen34) from Schizosaccharomyces pombe (strain 972 / ATCC 24843) (Fission yeast).